The chain runs to 393 residues: Short-chain dehydrogenase/reductase family 42E member 1 (393 aa).

Tyr-152 (proton acceptor) is an active-site residue. Lys-156 is an NAD(+) binding site. Helical transmembrane passes span 282 to 302 (LPLT…FILG) and 371 to 391 (GLLV…SVIL).

The protein belongs to the 3-beta-HSD family.

The protein resides in the membrane. In Macaca fascicularis (Crab-eating macaque), this protein is Short-chain dehydrogenase/reductase family 42E member 1 (SDR42E1).